Here is a 1360-residue protein sequence, read N- to C-terminus: Zinc finger protein GLI1 (1360 aa).

A disordered region spans residues aspartate 198–glutamate 245. The segment covering aspartate 230 to glutamate 245 has biased composition (basic and acidic residues). The C2H2-type 1 zinc-finger motif lies at threonine 250–histidine 275. Positions lysine 298 to histidine 306 are interaction with DNA. 3 C2H2-type zinc fingers span residues histidine 316–histidine 340, tyrosine 346–histidine 371, and tyrosine 377–histidine 402. Interaction with DNA stretches follow at residues alanine 360–lysine 365 and aspartate 390–lysine 396. Disordered regions lie at residues aspartate 390–glycine 434, isoleucine 457–aspartate 500, isoleucine 718–glycine 740, and tyrosine 1120–glutamine 1213. A compositionally biased stretch (low complexity) spans serine 461–serine 473. Residues glutamate 474–glycine 496 show a composition bias toward polar residues. The segment covering serine 1134–serine 1143 has biased composition (low complexity). The segment covering arginine 1173 to leucine 1190 has biased composition (polar residues).

The protein belongs to the GLI C2H2-type zinc-finger protein family.

It localises to the cytoplasm. The protein localises to the nucleus. Acts as a transcriptional activator. Binds to the DNA consensus sequence 5'-GACCACCCA-3'. May regulate the transcription of specific genes during normal development. Mediates SHH signaling. Plays a role in cell proliferation and differentiation via its role in SHH signaling. This Xenopus laevis (African clawed frog) protein is Zinc finger protein GLI1 (gli1).